A 248-amino-acid polypeptide reads, in one-letter code: UPF0246 protein lp_0089 (248 aa).

The protein belongs to the UPF0246 family.

The chain is UPF0246 protein lp_0089 from Lactiplantibacillus plantarum (strain ATCC BAA-793 / NCIMB 8826 / WCFS1) (Lactobacillus plantarum).